The chain runs to 404 residues: Glucose-1-phosphate adenylyltransferase (404 aa).

Alpha-D-glucose 1-phosphate-binding positions include tyrosine 99, glycine 164, 179–180, and serine 197; that span reads EK.

The protein belongs to the bacterial/plant glucose-1-phosphate adenylyltransferase family. As to quaternary structure, homotetramer.

It catalyses the reaction alpha-D-glucose 1-phosphate + ATP + H(+) = ADP-alpha-D-glucose + diphosphate. It functions in the pathway glycan biosynthesis; glycogen biosynthesis. In terms of biological role, involved in the biosynthesis of ADP-glucose, a building block required for the elongation reactions to produce glycogen. Catalyzes the reaction between ATP and alpha-D-glucose 1-phosphate (G1P) to produce pyrophosphate and ADP-Glc. The chain is Glucose-1-phosphate adenylyltransferase from Nocardia farcinica (strain IFM 10152).